Here is a 1282-residue protein sequence, read N- to C-terminus: Ribosome biogenesis protein BMS1 homolog (1282 aa).

Over residues 1 to 24 (MEAKDQKKHRKKNSGPKAAKKKKR) the composition is skewed to basic residues. A disordered region spans residues 1–43 (MEAKDQKKHRKKNSGPKAAKKKKRLLQDLQLGDEEDARKRNPK). K43 participates in a covalent cross-link: Glycyl lysine isopeptide (Lys-Gly) (interchain with G-Cter in SUMO2). Residues 80-245 (PPPIVVVVMG…GRFITVMKFR (166 aa)) enclose the Bms1-type G domain. The G1 stretch occupies residues 89–96 (GPPKVGKS). 89-96 (GPPKVGKS) serves as a coordination point for ATP. The G2 stretch occupies residues 117–121 (PVTIV). Positions 132-135 (ECGC) are G3. Positions 184 to 187 (THLD) are G4. The residue at position 188 (S188) is a Phosphoserine. Positions 219 to 228 (LSGMVHGEYQ) are G5. 2 disordered regions span residues 397–557 (DSKP…ANCQ) and 575–667 (PTFD…ALKW). Glycyl lysine isopeptide (Lys-Gly) (interchain with G-Cter in SUMO2) cross-links involve residues K399 and K415. Composition is skewed to acidic residues over residues 434–472 (GDED…ENAE) and 503–531 (DSDD…EDCT). A compositionally biased stretch (low complexity) spans 535–550 (KGISGSKAAGEGSKAG). At S552 the chain carries Phosphoserine. The segment covering 588–610 (FASEDESEESSSLSAEEEDSENE) has biased composition (acidic residues). Phosphoserine occurs at positions 625 and 639. K646 participates in a covalent cross-link: Glycyl lysine isopeptide (Lys-Gly) (interchain with G-Cter in SUMO2). Over residues 653–667 (EENNDSKETSGALKW) the composition is skewed to basic and acidic residues. The residue at position 708 (T708) is a Phosphothreonine. Disordered stretches follow at residues 787–822 (ETGD…ESAK) and 1178–1202 (NKPK…IREP). K810 participates in a covalent cross-link: Glycyl lysine isopeptide (Lys-Gly) (interchain with G-Cter in SUMO1); alternate. K810 is covalently cross-linked (Glycyl lysine isopeptide (Lys-Gly) (interchain with G-Cter in SUMO2); alternate). K1206 participates in a covalent cross-link: Glycyl lysine isopeptide (Lys-Gly) (interchain with G-Cter in SUMO2). A disordered region spans residues 1219–1282 (SQKMKKAKEQ…SLKGAEGQLQ (64 aa)). A compositionally biased stretch (basic and acidic residues) spans 1228–1248 (QRHLHNKEHFRAKQKEEEEKL). Positions 1249–1259 (KRQKDLRKKLF) are enriched in basic residues.

It belongs to the TRAFAC class translation factor GTPase superfamily. Bms1-like GTPase family. BMS1 subfamily. Part of the small subunit (SSU) processome, composed of more than 70 proteins and the RNA chaperone small nucleolar RNA (snoRNA) U3. Interacts with RCL1.

The protein localises to the nucleus. It localises to the nucleolus. It catalyses the reaction GTP + H2O = GDP + phosphate + H(+). Its function is as follows. GTPase required for the synthesis of 40S ribosomal subunits and for processing of pre-ribosomal RNA (pre-rRNA) at sites A0, A1, and A2. Controls access of pre-rRNA intermediates to RCL1 during ribosome biogenesis by binding RCL1 in a GTP-dependent manner, and delivering it to pre-ribosomes. GTP-binding and/or GTP hydrolysis may induce conformational rearrangements within the BMS1-RCL1 complex allowing the interaction of RCL1 with its RNA substrate. Required for RCL1 import into the nucleus. This chain is Ribosome biogenesis protein BMS1 homolog, found in Homo sapiens (Human).